A 43-amino-acid chain; its full sequence is Cytochrome b559 subunit beta (43 aa).

Residues 18-34 (WLAIHGLAIPTVFFLGG) form a helical membrane-spanning segment. Residue His22 participates in heme binding.

It belongs to the PsbE/PsbF family. Heterodimer of an alpha subunit and a beta subunit. PSII is composed of 1 copy each of membrane proteins PsbA, PsbB, PsbC, PsbD, PsbE, PsbF, PsbH, PsbI, PsbJ, PsbK, PsbL, PsbM, PsbT, PsbX, PsbY, PsbZ, Psb30/Ycf12, at least 3 peripheral proteins of the oxygen-evolving complex and a large number of cofactors. It forms dimeric complexes. Heme b serves as cofactor.

It is found in the plastid. The protein localises to the chloroplast thylakoid membrane. Its function is as follows. This b-type cytochrome is tightly associated with the reaction center of photosystem II (PSII). PSII is a light-driven water:plastoquinone oxidoreductase that uses light energy to abstract electrons from H(2)O, generating O(2) and a proton gradient subsequently used for ATP formation. It consists of a core antenna complex that captures photons, and an electron transfer chain that converts photonic excitation into a charge separation. The polypeptide is Cytochrome b559 subunit beta (Phaeodactylum tricornutum (strain CCAP 1055/1)).